The sequence spans 540 residues: MLO protein homolog 1 (540 aa).

Over 1–16 the chain is Extracellular; sequence MAGGRSGSRELPETPT. A helical transmembrane segment spans residues 17–37; sequence WAVAVVCAVLVLVSVAMEHGL. Topologically, residues 38–60 are cytoplasmic; that stretch reads HNLSHWFRRRQKKAMGDALDKIK. A helical transmembrane segment spans residues 61–81; that stretch reads AELMLLGFISLLLTVAQAPIS. Over 82 to 142 the chain is Extracellular; it reads KICIPKSAAN…MSAKSMHQLH (61 aa). A helical transmembrane segment spans residues 143–163; sequence IFIFVLAVFHVTYCVITMGLG. Over 164-265 the chain is Cytoplasmic; that stretch reads RLKMKKWKKW…IKRSLEDDFK (102 aa). The helical transmembrane segment at 266 to 286 threads the bilayer; the sequence is VVVGISLPLWFVGILVLFLDI. Position 287 (His-287) is a topological domain, extracellular. The chain crosses the membrane as a helical span at residues 288–308; sequence GLGTLIWISFVPLIIVLLVGT. The Cytoplasmic segment spans residues 309 to 347; it reads KLEMVIMQMAQEIQDRATVIQGAPVVEPSNKYFWFNRPD. The chain crosses the membrane as a helical span at residues 348 to 368; sequence WVLFFIHLTLFHNAFQMAHFV. Topologically, residues 369-383 are extracellular; sequence WTMATPGLKKCFHEN. The helical transmembrane segment at 384-404 threads the bilayer; sequence IWLSIVEVIVGISLQVLCSYI. The Cytoplasmic segment spans residues 405-540; it reads TFPLYALVTQ…DSDFSFSAQR (136 aa). The calmodulin-binding stretch occupies residues 426 to 447; sequence EQTMKALMNWRKKAMEKKKVRD. Residues 468-526 form a disordered region; that stretch reads ASPVHLLQDHRARSDDPPSPITVASPPAPEEDIYPVPAAAASRQLLDDPPDRRWMASSS. Basic and acidic residues-rich tracts occupy residues 474–483 and 512–521; these read LQDHRARSDD and LLDDPPDRRW.

This sequence belongs to the MLO family.

It localises to the membrane. May be involved in modulation of pathogen defense and leaf cell death. Activity seems to be regulated by Ca(2+)-dependent calmodulin binding and seems not to require heterotrimeric G proteins. This chain is MLO protein homolog 1 (MLO1), found in Oryza sativa subsp. japonica (Rice).